The chain runs to 370 residues: Chaperone protein DnaJ (370 aa).

A J domain is found at 4–68 (DYYQVLGVSK…QKRAAYDRFG (65 aa)). Residues 133–211 (GIEKNISFSS…CHGMGRYHKQ (79 aa)) form a CR-type zinc finger. The Zn(2+) site is built by cysteine 146, cysteine 149, cysteine 163, cysteine 166, cysteine 185, cysteine 188, cysteine 199, and cysteine 202. 4 CXXCXGXG motif repeats span residues 146 to 153 (CDACHGTG), 163 to 170 (CDSCGGVG), 185 to 192 (CHKCQGNG), and 199 to 206 (CKKCHGMG).

This sequence belongs to the DnaJ family. As to quaternary structure, homodimer. Zn(2+) serves as cofactor.

Its subcellular location is the cytoplasm. Functionally, participates actively in the response to hyperosmotic and heat shock by preventing the aggregation of stress-denatured proteins and by disaggregating proteins, also in an autonomous, DnaK-independent fashion. Unfolded proteins bind initially to DnaJ; upon interaction with the DnaJ-bound protein, DnaK hydrolyzes its bound ATP, resulting in the formation of a stable complex. GrpE releases ADP from DnaK; ATP binding to DnaK triggers the release of the substrate protein, thus completing the reaction cycle. Several rounds of ATP-dependent interactions between DnaJ, DnaK and GrpE are required for fully efficient folding. Also involved, together with DnaK and GrpE, in the DNA replication of plasmids through activation of initiation proteins. In Rickettsia typhi (strain ATCC VR-144 / Wilmington), this protein is Chaperone protein DnaJ.